The chain runs to 859 residues: Protein O-mannosyl-transferase Tmtc1 (859 aa).

Over 1 to 22 (MHTPKCRRPSMSATLSHKDLAG) the chain is Cytoplasmic. Residues 23–43 (LAGCSALAFVLYLNTLNAGFV) traverse the membrane as a helical segment. Residues 44–103 (YDDRRAILANGDVTGARPLANLLRNDFWGTPLVDSGSHGSWRPLCVLSFRLNYLAGGMTP) are Extracellular-facing. Residues 104 to 124 (LGYHLVNVMLHCVATWLVFLV) form a helical membrane-spanning segment. Residues 125 to 134 (ARTLLPSRMG) lie on the Cytoplasmic side of the membrane. Transmembrane regions (helical) follow at residues 135–154 (VLAAGALFAVHPAHTEAVAG) and 155–174 (LVGRADLASCVCYLLAYLSY). Residues 175 to 189 (RRHMLNREWGSLILT) lie on the Cytoplasmic side of the membrane. Residues 190–210 (IMLALAALLCKETAITALLLC) form a helical membrane-spanning segment. The Extracellular segment spans residues 211–245 (GLCDVLSPVGRENSDKVCDGSISGLASFNFQRRFR). Residues 246 to 266 (SLSILGFTLLCGLYCRLSLLP) form a helical membrane-spanning segment. At 267–288 (RPSTAFSAADNPTAHESCFWTR) the chain is on the cytoplasmic side. A helical transmembrane segment spans residues 289 to 309 (TLTFLYLPVANFGILLWPQEL). At 310 to 328 (SFDWGMEAVSRIRTLWDAR) the chain is on the extracellular side. Residues 329-349 (NILTAGFYGSLVAILWKGSGL) form a helical membrane-spanning segment. At 350-422 (RSAASPMDFA…SWTAAPILGT (73 aa)) the chain is on the cytoplasmic side. A helical membrane pass occupies residues 423–443 (AFLVLPFLPASNLLFYVGFVM). Over 444-446 (AER) the chain is Extracellular. The chain crosses the membrane as a helical span at residues 447–467 (VLYLPSVGYCLLFGLGFGHLW). The Cytoplasmic segment spans residues 468-473 (QRVNSS). The helical transmembrane segment at 474-493 (WRSRLMLLCGLALLLGVHGV) threads the bilayer. Topologically, residues 494-859 (RTFRRNLDWR…RMNVHKHENE (366 aa)) are extracellular. TPR repeat units follow at residues 518–551 (PKALGNLGSVLSAQGRYEEAELTLRMTLGHRPTM), 552–585 (ADAHFNLGVVHQKQLNFSSAIPCFRRAIELRPQL), 586–620 (AVAYLNLGTSLISLGDHRQEAISVLRTGARLEGSG), 632–665 (YTCYLQLSVLYRSDGRLQDAAAALRESLKALPLL), 671–704 (AVLHLRLGEILAELQDWNEAEHQQRLAMQLQPEQ), 705–739 (GAAYVTYGQTLARNGSRLAEAESWFKRALQLAPLE), 740–773 (PSSHHHYADFLEQQERHHEALGLRLRAAALAPQD), 774–807 (YTLQSCVADALRLLNRLAEAELWYRKAVTLQPMA), and 808–841 (AHAHANLGAILQMRGLRKEAVACYHKALELQPGH). An N-linked (GlcNAc...) asparagine glycan is attached at asparagine 567. Asparagine 718 is a glycosylation site (N-linked (GlcNAc...) asparagine).

It belongs to the TMTC family.

It is found in the membrane. It localises to the endoplasmic reticulum. It carries out the reaction a di-trans,poly-cis-dolichyl beta-D-mannosyl phosphate + L-seryl-[protein] = 3-O-(alpha-D-mannosyl)-L-seryl-[protein] + a di-trans,poly-cis-dolichyl phosphate + H(+). The catalysed reaction is a di-trans,poly-cis-dolichyl beta-D-mannosyl phosphate + L-threonyl-[protein] = 3-O-(alpha-D-mannosyl)-L-threonyl-[protein] + a di-trans,poly-cis-dolichyl phosphate + H(+). It functions in the pathway protein modification; protein glycosylation. Transfers mannosyl residues to the hydroxyl group of serine or threonine residues. The protein is Protein O-mannosyl-transferase Tmtc1 of Drosophila melanogaster (Fruit fly).